A 159-amino-acid polypeptide reads, in one-letter code: Eukaryotic translation initiation factor 5A-2 (159 aa).

Basic and acidic residues predominate over residues 1 to 10 (MSDEEHHFEP). The segment at 1-21 (MSDEEHHFEPAADAGASKTYP) is disordered. Lys-52 is modified (hypusine).

This sequence belongs to the eIF-5A family. Lys-52 undergoes hypusination, a unique post-translational modification that consists in the addition of a butylamino group from spermidine to lysine side chain, leading to the formation of the unusual amino acid hypusine. eIF-5As are the only known proteins to undergo this modification, which is essential for their function.

Functionally, translation factor that promotes translation elongation and termination, particularly upon ribosome stalling at specific amino acid sequence contexts. Binds between the exit (E) and peptidyl (P) site of the ribosome and promotes rescue of stalled ribosome: specifically required for efficient translation of polyproline-containing peptides as well as other motifs that stall the ribosome. Acts as a ribosome quality control (RQC) cofactor by joining the RQC complex to facilitate peptidyl transfer during CAT tailing step. In Medicago sativa (Alfalfa), this protein is Eukaryotic translation initiation factor 5A-2.